The primary structure comprises 347 residues: Phenylalanine--tRNA ligase alpha subunit (347 aa).

E265 provides a ligand contact to Mg(2+).

This sequence belongs to the class-II aminoacyl-tRNA synthetase family. Phe-tRNA synthetase alpha subunit type 1 subfamily. Tetramer of two alpha and two beta subunits. Requires Mg(2+) as cofactor.

Its subcellular location is the cytoplasm. It carries out the reaction tRNA(Phe) + L-phenylalanine + ATP = L-phenylalanyl-tRNA(Phe) + AMP + diphosphate + H(+). The protein is Phenylalanine--tRNA ligase alpha subunit of Wolbachia pipientis wMel.